The sequence spans 176 residues: Large ribosomal subunit protein uL5 (176 aa).

Belongs to the universal ribosomal protein uL5 family. As to quaternary structure, part of the 50S ribosomal subunit; contacts the 5S rRNA and probably tRNA. Forms a bridge to the 30S subunit in the 70S ribosome.

This is one of the proteins that bind and probably mediate the attachment of the 5S RNA into the large ribosomal subunit, where it forms part of the central protuberance. In the 70S ribosome it contacts protein S13 of the 30S subunit (bridge B1b), connecting the 2 subunits; this bridge is implicated in subunit movement. May contact the P site tRNA; the 5S rRNA and some of its associated proteins might help stabilize positioning of ribosome-bound tRNAs. This is Large ribosomal subunit protein uL5 from Picrophilus torridus (strain ATCC 700027 / DSM 9790 / JCM 10055 / NBRC 100828 / KAW 2/3).